Consider the following 60-residue polypeptide: Small integral membrane protein 3 (60 aa).

A helical membrane pass occupies residues 20–40 (IWAIVLIILATVVIMTSLFLC).

The protein resides in the membrane. The sequence is that of Small integral membrane protein 3 (Smim3) from Rattus norvegicus (Rat).